Reading from the N-terminus, the 327-residue chain is Ventral anterior homeobox 1 (327 aa).

A compositionally biased stretch (basic and acidic residues) spans 1–34 (MFGKQDKMDVRCSTETEANRVSKNGHKEGKDSKG). Residues 1 to 41 (MFGKQDKMDVRCSTETEANRVSKNGHKEGKDSKGAEGNIST) form a disordered region. The homeobox DNA-binding region spans 99-158 (PKRTRTSFTAEQLYRLEMEFQRCQYVVGRERTELARQLNLSETQVKVWFQNRRTKQKKDQ). Over residues 230–245 (APAGGSPHPPSAGTAA) the composition is skewed to low complexity. The interval 230–249 (APAGGSPHPPSAGTAAGPPP) is disordered.

Belongs to the EMX homeobox family.

Its subcellular location is the nucleus. In terms of biological role, transcription factor that plays a role in establishing dorsal-ventral polarity in the neural retina. The sequence is that of Ventral anterior homeobox 1 (VAX1) from Gallus gallus (Chicken).